The following is a 136-amino-acid chain: Protein PsiE (136 aa).

Transmembrane regions (helical) follow at residues 15-35 (ILQN…VVFL), 55-75 (YELV…ALIV), 83-103 (HFPL…LIIV), and 108-128 (PMDV…LWLC).

It belongs to the PsiE family.

It localises to the cell inner membrane. This chain is Protein PsiE, found in Salmonella gallinarum (strain 287/91 / NCTC 13346).